Reading from the N-terminus, the 219-residue chain is NADH-ubiquinone oxidoreductase 23 kDa subunit, mitochondrial (219 aa).

4Fe-4S ferredoxin-type domains follow at residues 111 to 140 and 150 to 179; these read RRYPSGEERCIACKLCEAVCPAQAITIEAE and TRYDIDMTKCIYCGFCQESCPVDAIVESPN. Cysteine 120, cysteine 123, cysteine 126, cysteine 130, cysteine 159, cysteine 162, cysteine 165, and cysteine 169 together coordinate [4Fe-4S] cluster.

It belongs to the complex I 23 kDa subunit family. As to quaternary structure, complex I is composed of about 40 different subunits. Requires [4Fe-4S] cluster as cofactor.

It localises to the mitochondrion. It carries out the reaction a ubiquinone + NADH + 5 H(+)(in) = a ubiquinol + NAD(+) + 4 H(+)(out). Its function is as follows. Core subunit of the mitochondrial membrane respiratory chain NADH dehydrogenase (Complex I) that is believed to belong to the minimal assembly required for catalysis. Complex I functions in the transfer of electrons from NADH to the respiratory chain. The immediate electron acceptor for the enzyme is believed to be ubiquinone. May donate electrons to ubiquinone. The polypeptide is NADH-ubiquinone oxidoreductase 23 kDa subunit, mitochondrial (nuo21.3c) (Neurospora crassa (strain ATCC 24698 / 74-OR23-1A / CBS 708.71 / DSM 1257 / FGSC 987)).